The primary structure comprises 372 residues: Queuine tRNA-ribosyltransferase (372 aa).

Residue Asp92 is the Proton acceptor of the active site. Residues 92–96 (DSGGF), Asp146, Gln188, and Gly215 contribute to the substrate site. Positions 246 to 252 (GIGTLRE) are RNA binding. Asp265 functions as the Nucleophile in the catalytic mechanism. Residues 270-274 (TRLGR) are RNA binding; important for wobble base 34 recognition. The Zn(2+) site is built by Cys303, Cys305, Cys308, and His334.

It belongs to the queuine tRNA-ribosyltransferase family. Homodimer. Within each dimer, one monomer is responsible for RNA recognition and catalysis, while the other monomer binds to the replacement base PreQ1. Zn(2+) serves as cofactor.

It catalyses the reaction 7-aminomethyl-7-carbaguanine + guanosine(34) in tRNA = 7-aminomethyl-7-carbaguanosine(34) in tRNA + guanine. The protein operates within tRNA modification; tRNA-queuosine biosynthesis. Its function is as follows. Catalyzes the base-exchange of a guanine (G) residue with the queuine precursor 7-aminomethyl-7-deazaguanine (PreQ1) at position 34 (anticodon wobble position) in tRNAs with GU(N) anticodons (tRNA-Asp, -Asn, -His and -Tyr). Catalysis occurs through a double-displacement mechanism. The nucleophile active site attacks the C1' of nucleotide 34 to detach the guanine base from the RNA, forming a covalent enzyme-RNA intermediate. The proton acceptor active site deprotonates the incoming PreQ1, allowing a nucleophilic attack on the C1' of the ribose to form the product. After dissociation, two additional enzymatic reactions on the tRNA convert PreQ1 to queuine (Q), resulting in the hypermodified nucleoside queuosine (7-(((4,5-cis-dihydroxy-2-cyclopenten-1-yl)amino)methyl)-7-deazaguanosine). The protein is Queuine tRNA-ribosyltransferase of Prochlorococcus marinus (strain MIT 9313).